A 142-amino-acid polypeptide reads, in one-letter code: MSNILGLDVGSKTIGLASSTGNVAKKEINLKFEEWNFEEGVSLLTEFIKDKSFDTFVFGYPKNMNGSIGERAEMVDYFIEGFMVYNPEIKEEQIIRIDERRTTKMAKSIMIEAGLSRQKQKENKDTLAAQLILETYLEKIKK.

The protein belongs to the YqgF nuclease family.

The protein localises to the cytoplasm. Its function is as follows. Could be a nuclease involved in processing of the 5'-end of pre-16S rRNA. The sequence is that of Putative pre-16S rRNA nuclease from Mesoplasma florum (strain ATCC 33453 / NBRC 100688 / NCTC 11704 / L1) (Acholeplasma florum).